The primary structure comprises 173 residues: MIREEEVFKIGQFAKPHGIKGELSLVTNSDVLEDAEDPYIVCEMDGILVPFFVEDFRYKTDTVVLVKLEDVNSEEDARMFVGKEVFYPLDAVDEEDLVGDMTWDSFIGYTVTDVQKGYLGEITDVDETTINVLLRVDHKGEELLIPAVEELITEADHEARSLTVSLPEGLIDL.

In terms of domain architecture, PRC barrel spans 98–170 (VGDMTWDSFI…SLTVSLPEGL (73 aa)).

This sequence belongs to the RimM family. As to quaternary structure, binds ribosomal protein uS19.

Its subcellular location is the cytoplasm. An accessory protein needed during the final step in the assembly of 30S ribosomal subunit, possibly for assembly of the head region. Essential for efficient processing of 16S rRNA. May be needed both before and after RbfA during the maturation of 16S rRNA. It has affinity for free ribosomal 30S subunits but not for 70S ribosomes. The sequence is that of Ribosome maturation factor RimM from Parabacteroides distasonis (strain ATCC 8503 / DSM 20701 / CIP 104284 / JCM 5825 / NCTC 11152).